We begin with the raw amino-acid sequence, 884 residues long: uncharacterized protein (884 aa).

This is an uncharacterized protein from Mycobacterium bovis (strain ATCC BAA-935 / AF2122/97).